A 116-amino-acid polypeptide reads, in one-letter code: NADH-ubiquinone oxidoreductase chain 3 (116 aa).

3 consecutive transmembrane segments (helical) span residues 4–24, 56–76, and 87–107; these read FMVM…LAFW, FFLV…LLPS, and FTLL…IYEW.

This sequence belongs to the complex I subunit 3 family.

It is found in the mitochondrion membrane. It carries out the reaction a ubiquinone + NADH + 5 H(+)(in) = a ubiquinol + NAD(+) + 4 H(+)(out). Functionally, core subunit of the mitochondrial membrane respiratory chain NADH dehydrogenase (Complex I) that is believed to belong to the minimal assembly required for catalysis. Complex I functions in the transfer of electrons from NADH to the respiratory chain. The immediate electron acceptor for the enzyme is believed to be ubiquinone. The polypeptide is NADH-ubiquinone oxidoreductase chain 3 (MT-ND3) (Petromyzon marinus (Sea lamprey)).